Reading from the N-terminus, the 305-residue chain is MVNIEKFIDQAVREIRDAAGEDKVVMALSGGVDSSVCAALATRAIGDQLVPIYVDTGLMRKGETDRIRSLFADANLRVVDAADEFFEALAGIVDPEEKRKAIGAKFIRIFEREAKRTGATMLLQGTIYPDRIESEGGIKSHHNVGGMPLDIEFKGVIEPLADLYKDEVREVAGGLGLPAEIQHRMPFPGPGLAVRVLGEVTKEKIAIVREANAIVEECLVEEFRPWQCFAALIGLGTGVKGDVRLHGWIVAVRAVGSRDGMTADPLLLPYETLSRMATRITAEIPGVARVVYDVTPKPPATIEYE.

Positions 2 to 184 constitute a GMPS ATP-PPase domain; it reads VNIEKFIDQA…LGLPAEIQHR (183 aa). 29–35 provides a ligand contact to ATP; sequence SGGVDSS.

Heterodimer composed of a glutamine amidotransferase subunit (A) and a GMP-binding subunit (B).

The enzyme catalyses XMP + L-glutamine + ATP + H2O = GMP + L-glutamate + AMP + diphosphate + 2 H(+). Its pathway is purine metabolism; GMP biosynthesis; GMP from XMP (L-Gln route): step 1/1. Functionally, catalyzes the synthesis of GMP from XMP. This is GMP synthase [glutamine-hydrolyzing] subunit B from Methanoculleus marisnigri (strain ATCC 35101 / DSM 1498 / JR1).